Here is a 307-residue protein sequence, read N- to C-terminus: Dihydroorotate dehydrogenase A (fumarate) (307 aa).

Residues Ser21 and 46-47 (KT) contribute to the FMN site. Substrate-binding positions include Lys46, 70-74 (NSVGL), and Asn130. Asn130 serves as a coordination point for FMN. Cys133 acts as the Nucleophile in catalysis. FMN contacts are provided by Lys168 and Ile194. 195 to 196 (NT) is a binding site for substrate. FMN contacts are provided by residues Gly220, 246–247 (GG), and 268–269 (GS).

It belongs to the dihydroorotate dehydrogenase family. Type 1 subfamily. In terms of assembly, homodimer. The cofactor is FMN.

It is found in the cytoplasm. It carries out the reaction (S)-dihydroorotate + fumarate = orotate + succinate. It participates in pyrimidine metabolism; UMP biosynthesis via de novo pathway. In terms of biological role, catalyzes the conversion of dihydroorotate to orotate with fumarate as the electron acceptor. The sequence is that of Dihydroorotate dehydrogenase A (fumarate) (pyrD) from Lactobacillus delbrueckii subsp. bulgaricus (strain ATCC BAA-365 / Lb-18).